The chain runs to 462 residues: Siroheme synthase (462 aa).

The segment at 1–201 (MQFLPLFHKL…GKPEEGERLL (201 aa)) is precorrin-2 dehydrogenase /sirohydrochlorin ferrochelatase. NAD(+) contacts are provided by residues 22–23 (EV) and 43–44 (PE). Ser-126 carries the post-translational modification Phosphoserine. The uroporphyrinogen-III C-methyltransferase stretch occupies residues 214-462 (GEVYLVGAGP…AWFEGAQGSL (249 aa)). Pro-223 is an S-adenosyl-L-methionine binding site. Residue Asp-246 is the Proton acceptor of the active site. Residue Lys-268 is the Proton donor of the active site. S-adenosyl-L-methionine contacts are provided by residues 299–301 (GGD), Ile-304, 329–330 (TA), Met-381, and Gly-410.

In the N-terminal section; belongs to the precorrin-2 dehydrogenase / sirohydrochlorin ferrochelatase family. This sequence in the C-terminal section; belongs to the precorrin methyltransferase family.

The enzyme catalyses uroporphyrinogen III + 2 S-adenosyl-L-methionine = precorrin-2 + 2 S-adenosyl-L-homocysteine + H(+). The catalysed reaction is precorrin-2 + NAD(+) = sirohydrochlorin + NADH + 2 H(+). It catalyses the reaction siroheme + 2 H(+) = sirohydrochlorin + Fe(2+). Its pathway is cofactor biosynthesis; adenosylcobalamin biosynthesis; precorrin-2 from uroporphyrinogen III: step 1/1. It participates in cofactor biosynthesis; adenosylcobalamin biosynthesis; sirohydrochlorin from precorrin-2: step 1/1. The protein operates within porphyrin-containing compound metabolism; siroheme biosynthesis; precorrin-2 from uroporphyrinogen III: step 1/1. It functions in the pathway porphyrin-containing compound metabolism; siroheme biosynthesis; siroheme from sirohydrochlorin: step 1/1. Its pathway is porphyrin-containing compound metabolism; siroheme biosynthesis; sirohydrochlorin from precorrin-2: step 1/1. In terms of biological role, multifunctional enzyme that catalyzes the SAM-dependent methylations of uroporphyrinogen III at position C-2 and C-7 to form precorrin-2 via precorrin-1. Then it catalyzes the NAD-dependent ring dehydrogenation of precorrin-2 to yield sirohydrochlorin. Finally, it catalyzes the ferrochelation of sirohydrochlorin to yield siroheme. This chain is Siroheme synthase, found in Ectopseudomonas mendocina (strain ymp) (Pseudomonas mendocina).